Here is a 428-residue protein sequence, read N- to C-terminus: Synaptotagmin-1 (428 aa).

The Vesicular segment spans residues 1–67; sequence MDSLLARVKR…KDKLINEIEN (67 aa). A disordered region spans residues 16-50; the sequence is ALNPAQEGVTGGPDAAGLPDVSTSSPGGGGAGDKL. A helical transmembrane segment spans residues 68–92; it reads LPIWAIVLIIAGSLLFLVCCVYCVC. The Cytoplasmic portion of the chain corresponds to 93–428; sequence RRSCRKRKKK…HTLQEVPEKN (336 aa). Ser-123 carries the phosphoserine; by PRKC2 modification. The segment at 147–395 is phospholipid binding; the sequence is STKSEVKLGK…PIGRCVLGCN (249 aa). 2 C2 domains span residues 153–272 and 286–419; these read KLGK…EDWK and KLGD…AQWH. Ca(2+) contacts are provided by Asp-184, Asp-190, Asp-242, Phe-243, Asp-244, Ser-247, Lys-248, Asp-250, Asp-317, Asp-323, Asp-377, and Asp-379.

Belongs to the synaptotagmin family. Binds SNAP25. Isoform 3 binds SNAP25 with higher affinity. Ca(2+) serves as cofactor.

The protein localises to the cytoplasmic vesicle. It localises to the secretory vesicle. The protein resides in the synaptic vesicle membrane. Its subcellular location is the synapse. Its function is as follows. Acts as inhibitor of neurotransmitter release. Overexpression leads to a decrease in the amplitude of the excitatory postsynaptic potential in dissected cholinergic and glutaminergic neurons while depletion with antisense oligonucleotides leads to an increase. Overexpression of isoform 1 blocks the reversal of synaptic depression by serotonin in sensory neurons. The chain is Synaptotagmin-1 (SYT1) from Aplysia californica (California sea hare).